Reading from the N-terminus, the 1835-residue chain is Protein TIC 214 (1835 aa).

6 consecutive transmembrane segments (helical) span residues 25-45, 64-84, 87-107, 124-144, 172-192, and 221-241; these read VGLY…LFLL, FITG…HLAL, PHTI…WNNH, LSIQ…HFIL, VGWL…LFWI, and IFSI…PSPI. A compositionally biased stretch (basic and acidic residues) spans 246-258; it reads LKETSETEERGES. 3 disordered regions span residues 246–304, 735–759, and 1535–1578; these read LKET…DGNQ, EFKT…KKEE, and NRNQ…KRQS. Positions 259-268 are enriched in acidic residues; sequence AEETDVEIET. A compositionally biased stretch (basic and acidic residues) spans 1553 to 1569; sequence PRNRQKDLEKDYAESDI.

The protein belongs to the TIC214 family. In terms of assembly, part of the Tic complex.

It localises to the plastid. It is found in the chloroplast inner membrane. In terms of biological role, involved in protein precursor import into chloroplasts. May be part of an intermediate translocation complex acting as a protein-conducting channel at the inner envelope. The sequence is that of Protein TIC 214 from Liriodendron tulipifera (Tuliptree).